A 524-amino-acid chain; its full sequence is Cytochrome P450 monooxygenase ankB (524 aa).

The chain crosses the membrane as a helical span at residues 22–42 (FHALSIQAPGLLLGTLLFYLF). C466 contributes to the heme binding site.

It belongs to the cytochrome P450 family. Heme is required as a cofactor.

The protein localises to the membrane. It catalyses the reaction cyclo(L-arginyl-tyrosyl) + reduced [NADPH--hemoprotein reductase] + O2 = cyclo(L-arginyl-L-dehydrotyrosyl) + oxidized [NADPH--hemoprotein reductase] + 2 H2O + H(+). It participates in alkaloid biosynthesis. Functionally, cytochrome P450 monooxygenase; part of the ank cluster that mediates the biosynthesis of NK13650 C, a highly modified cyclo-arginine-tyrosine dipeptide. AnkB is responsible for desaturation of the ankA product cyclo-Arg-Tyr diketopiperazine, likely through hydroxylation of the benzylic position followed by dehydration to yield a dehydro-cyclodipeptide. Within the pathway, the cyclodipeptide synthase ankA acts as the scaffold-generating enzyme and is responsible for formation of the cyclo-Arg-Tyr diketopiperazine (cRY) from L-Arg and L-Tyr. The ankA product cRY is desaturated by the cytochrome P450 monooxygenase ankB to yield a dehydro-cyclodipeptide intermediate. The FAD-dependent monooxygenase ankC then installs the m-OH, ankD catalyzes the attachment of L-homoserine, and ankE ligates citrate to the ankD product to yield NK13650 B. The O-methyltransferase ankF is responsible for methylation of the C-17 phenol group of NK13650 B to produce NK13650 D. Amidation of NK13650 D with L-Asp by ankG then leads to the production of NK13650 C, whereas amidation of NK13650 B produces NK13650 A. This is Cytochrome P450 monooxygenase ankB from Aspergillus thermomutatus (Neosartorya pseudofischeri).